A 317-amino-acid polypeptide reads, in one-letter code: Porphobilinogen deaminase (317 aa).

The residue at position 245 (C245) is an S-(dipyrrolylmethanemethyl)cysteine.

This sequence belongs to the HMBS family. In terms of assembly, monomer. It depends on dipyrromethane as a cofactor.

It carries out the reaction 4 porphobilinogen + H2O = hydroxymethylbilane + 4 NH4(+). Its pathway is porphyrin-containing compound metabolism; protoporphyrin-IX biosynthesis; coproporphyrinogen-III from 5-aminolevulinate: step 2/4. The protein operates within porphyrin-containing compound metabolism; chlorophyll biosynthesis. Its function is as follows. Tetrapolymerization of the monopyrrole PBG into the hydroxymethylbilane pre-uroporphyrinogen in several discrete steps. The sequence is that of Porphobilinogen deaminase from Parasynechococcus marenigrum (strain WH8102).